We begin with the raw amino-acid sequence, 436 residues long: Glutamate-1-semialdehyde 2,1-aminomutase 2 (436 aa).

At lysine 271 the chain carries N6-(pyridoxal phosphate)lysine.

The protein belongs to the class-III pyridoxal-phosphate-dependent aminotransferase family. HemL subfamily. In terms of assembly, homodimer. Requires pyridoxal 5'-phosphate as cofactor.

It localises to the cytoplasm. It catalyses the reaction (S)-4-amino-5-oxopentanoate = 5-aminolevulinate. It participates in porphyrin-containing compound metabolism; protoporphyrin-IX biosynthesis; 5-aminolevulinate from L-glutamyl-tRNA(Glu): step 2/2. In Exiguobacterium sibiricum (strain DSM 17290 / CCUG 55495 / CIP 109462 / JCM 13490 / 255-15), this protein is Glutamate-1-semialdehyde 2,1-aminomutase 2.